Here is a 281-residue protein sequence, read N- to C-terminus: Undecaprenyl-diphosphatase (281 aa).

8 helical membrane-spanning segments follow: residues 4 to 24 (IEIL…WLPI), 45 to 65 (AFMS…VMVI), 89 to 109 (WLKV…DDWF), 113 to 133 (FHNM…FIYL), 152 to 172 (LPYT…LPGT), 190 to 210 (SVVT…ASAL), 225 to 245 (GQLF…MVAI), and 257 to 277 (FTLF…YSFV).

Belongs to the UppP family.

It is found in the cell membrane. The enzyme catalyses di-trans,octa-cis-undecaprenyl diphosphate + H2O = di-trans,octa-cis-undecaprenyl phosphate + phosphate + H(+). In terms of biological role, catalyzes the dephosphorylation of undecaprenyl diphosphate (UPP). Confers resistance to bacitracin. The sequence is that of Undecaprenyl-diphosphatase from Streptococcus pneumoniae (strain Hungary19A-6).